Consider the following 103-residue polypeptide: Small ribosomal subunit protein uS14c (103 aa).

Residues 34 to 56 (KVSPLSLSEKTKMREKLQSLPRN) form a disordered region.

Belongs to the universal ribosomal protein uS14 family. In terms of assembly, part of the 30S ribosomal subunit.

The protein resides in the plastid. It is found in the chloroplast. Functionally, binds 16S rRNA, required for the assembly of 30S particles. The polypeptide is Small ribosomal subunit protein uS14c (Brachypodium distachyon (Purple false brome)).